Reading from the N-terminus, the 784-residue chain is uncharacterized protein (784 aa).

The 198-residue stretch at 422 to 619 folds into the 3'-5' exonuclease domain; it reads IRIVQNEQDL…EVFQKIVEVV (198 aa).

This is an uncharacterized protein from Caenorhabditis elegans.